The sequence spans 164 residues: MMEEVGTAGNNLGATEIDHDEQNTFLRICRTGSIYELMEVTPFFGGDRHLLHRYDRHGRQCIHTVAWHDRANAVMKIEILMQSGVNINAKELGTGNTLLHIAASTGNYLLADWFCQQLGVDLGASNNQQETAYYIAYKMRDRKMMKLLRAHGVAYNNTLSAGLL.

ANK repeat units lie at residues 57–89 (HGRQ…NINA), 94–124 (TGNT…DLGA), and 128–157 (QQET…AYNN).

The protein belongs to the polydnaviridae I-Kappa-B-like protein family.

In terms of biological role, suppresses the host immune response through NF-kappa-B inactivation. Possesses ankyrin repeat domains required for NF-kappa-B binding but lacks the regulatory regions required for dissociation from NF-kappa-B and degradation. Therefore, prevents host NF-kappa-B release and subsequent activation. The chain is I-Kappa-B like protein F1 (F2) from Microplitis demolitor bracovirus (isolate Webb) (MdBV).